The primary structure comprises 108 residues: Peptidyl-prolyl cis-trans isomerase FKBP1B (108 aa).

The PPIase FKBP-type domain maps to 20-108 (GQICVVHYTG…IFDVELLNLE (89 aa)).

This sequence belongs to the FKBP-type PPIase family. FKBP1 subfamily. Identified in a complex composed of RYR2, FKBP1B, PKA catalytic subunit, PRKAR2A, AKAP6, and the protein phosphatases PP2A and PP1. Interacts directly with RYR2. In terms of tissue distribution, detected in heart muscle (at protein level). Ubiquitous.

The protein localises to the cytoplasm. It localises to the sarcoplasmic reticulum. It catalyses the reaction [protein]-peptidylproline (omega=180) = [protein]-peptidylproline (omega=0). With respect to regulation, inhibited by both FK506 and rapamycin. Has the potential to contribute to the immunosuppressive and toxic effects of FK506 and rapamycin. PPIases accelerate the folding of proteins. It catalyzes the cis-trans isomerization of proline imidic peptide bonds in oligopeptides. In Rattus norvegicus (Rat), this protein is Peptidyl-prolyl cis-trans isomerase FKBP1B (Fkbp1b).